We begin with the raw amino-acid sequence, 59 residues long: Embryonic testis differentiation protein homolog A (59 aa).

The segment covering 1–10 (MDKEVPKGSP) has biased composition (basic and acidic residues). Positions 1-25 (MDKEVPKGSPREPALNIKKSDKSFK) are disordered.

This is Embryonic testis differentiation protein homolog A from Homo sapiens (Human).